A 154-amino-acid chain; its full sequence is Cell cycle regulator of non-homologous end joining (154 aa).

Position 1 is an N-acetylmethionine (Met1). The KBM signature appears at 1–21; it reads METLKSENKKRVLPSWMTAPV. The interval 77-144 is disordered; it reads EEPTLVAPDK…RSPEEEEEDA (68 aa). Residues 95-105 are compositionally biased toward low complexity; the sequence is ASPHTSSPGSS. The short motif at 144-154 is the XLM element; it reads ALKYVREIFFS.

In terms of assembly, interacts (via KBM motif) with XRCC5/Ku80 and XRCC6/Ku70 heterodimer. Interacts (via XLF motif) with TRIM28/KAP1, ATM, MRE11, NBN and RAD50. Interacts with splicing factor SF3B1. Interacts with ERCC6L2; this interaction is DNA independent.

The protein localises to the cytoplasm. It localises to the nucleus. It is found in the chromosome. Its function is as follows. Cell-cycle-specific regulator of classical non-homologous end joining (NHEJ) of DNA double-strand break (DSB) repair, which can act both as an activator or inhibitor of NHEJ, depending on the cell cycle phase. Acts as a regulator of DNA repair pathway choice by specifically inhibiting classical NHEJ during the S and G2 phases, thereby promoting error-free repair by homologous recombination during cell cycle phases when sister chromatids are present. Preferentially protects single-stranded overhangs at break sites by inhibiting classical NHEJ, thereby creating a local environment that favors homologous recombination. Acts via interaction with XRCC5/Ku80 and XRCC6/Ku70. In contrast, acts as an activator of NHEJ during G1 phase of the cell cycle: promotes classical NHEJ in G1 phase cells via multivalent interactions that increase the affinity of DNA damage response proteins for DSB-associated chromatin. Also involved in immunoglobulin V(D)J recombination. May act as a regulator of proteasome. In case of infection by a retrovirus, may regulate the proteasome during the uncoating phase of retrovirus. In Cricetulus griseus (Chinese hamster), this protein is Cell cycle regulator of non-homologous end joining.